Reading from the N-terminus, the 350-residue chain is Putative isomerase YbhH (350 aa).

Belongs to the PrpF family.

The sequence is that of Putative isomerase YbhH (ybhH) from Escherichia coli O6:H1 (strain CFT073 / ATCC 700928 / UPEC).